The sequence spans 109 residues: NADH-quinone oxidoreductase subunit K (109 aa).

A run of 3 helical transmembrane segments spans residues 12 to 32 (LNHY…GLFM), 40 to 60 (ILMS…AFSV), and 72 to 92 (IIIL…LLIY).

This sequence belongs to the complex I subunit 4L family. As to quaternary structure, NDH-1 is composed of 14 different subunits. Subunits NuoA, H, J, K, L, M, N constitute the membrane sector of the complex.

The protein resides in the cell inner membrane. It carries out the reaction a quinone + NADH + 5 H(+)(in) = a quinol + NAD(+) + 4 H(+)(out). In terms of biological role, NDH-1 shuttles electrons from NADH, via FMN and iron-sulfur (Fe-S) centers, to quinones in the respiratory chain. The immediate electron acceptor for the enzyme in this species is believed to be ubiquinone. Couples the redox reaction to proton translocation (for every two electrons transferred, four hydrogen ions are translocated across the cytoplasmic membrane), and thus conserves the redox energy in a proton gradient. The chain is NADH-quinone oxidoreductase subunit K from Rickettsia bellii (strain RML369-C).